The chain runs to 356 residues: MAGLKLQAVTKSWDGKTQVIKPLTLDVADGEFIVMVGPSGCGKSTLLRMVAGLERVTTGDIWIDRKRVTEMEPKDRGIAMVFQNYALYPHMSVEENMAWGLKIRGMGKQQIAERVKEAARILELDGLLKRRPRELSGGQRQRVAMGRAIVREPAVFLFDEPLSNLDAKLRVQMRLELQQLHRRLKTTSLYVTHDQVEAMTLAQRVMVMNGGVAEQIGTPVEVYEKPASLFVASFIGSPAMNLLAGRVNNEGTHFELDGGITLPLNGGYRQYAGRKMTLGIRPEHIALSSQAEGGVPLVMDTLEILGADNLAHGRWGEQKLVVRLAHQERPTAGSTLWLHLPENQLHLFDGETGQRV.

The ABC transporter domain maps to 4–235 (LKLQAVTKSW…PASLFVASFI (232 aa)). 37-44 (GPSGCGKS) is a binding site for ATP.

The protein belongs to the ABC transporter superfamily. sn-glycerol-3-phosphate importer (TC 3.A.1.1.3) family. The complex is composed of two ATP-binding proteins (UgpC), two transmembrane proteins (UgpA and UgpE) and a solute-binding protein (UgpB).

The protein localises to the cell inner membrane. The enzyme catalyses sn-glycerol 3-phosphate(out) + ATP + H2O = sn-glycerol 3-phosphate(in) + ADP + phosphate + H(+). Part of the ABC transporter complex UgpBAEC involved in sn-glycerol-3-phosphate (G3P) import. Responsible for energy coupling to the transport system. The sequence is that of sn-glycerol-3-phosphate import ATP-binding protein UgpC from Escherichia coli (strain UTI89 / UPEC).